A 92-amino-acid chain; its full sequence is UPF0473 protein BCE33L4129 (92 aa).

This sequence belongs to the UPF0473 family.

This chain is UPF0473 protein BCE33L4129, found in Bacillus cereus (strain ZK / E33L).